We begin with the raw amino-acid sequence, 650 residues long: Peroxisomal biogenesis factor 8 (650 aa).

The Microbody targeting signal signature appears at 648 to 650 (AKL).

It is found in the peroxisome matrix. Its function is as follows. Essential for peroxisome biogenesis. May play a role in triggering the protein import competence of individual peroxisomes. It may interact with PEX10. This Pichia angusta (Yeast) protein is Peroxisomal biogenesis factor 8 (PEX8).